The chain runs to 770 residues: MFRYESLEDCPLDEDEDAFQGLGEEDEEIDQFNDDTFGSGAVDDDWQEAHERLAELEEKLPVAADEQTGNGERDEMDLLGDHEENLAERLSKMVIENELEDPAIMRAVQTRPVLQPQPGSLNSSIWDGSEVLRRIRGPLLAQEMPTVSVLEYALPQRPLQGPEDDRDLSERALPRRSTSPIIGSPPVRAVPIGTPPKQMAVPSFNQQILCPKPVHVRPPMPPRYPAPYGERISPNQLCSVPNSSLLGHPFPPNVPPVLSPLQRAQLLGGAQLQPGRMSPSQFARVPGFVGSPLAAMNPKLLQGRVGQMLPPAPSFRAFFSAPPPATPPPQQHPPGPGPHLQNLRPQAPMFRADTTHLHPQHRRLLHQRQLQSRNQHRNLNGTGDRGGHQSSHQDHLRKDPYANLMLQREKDWVSKIQMMQLQSTDPYLDDFYYQNYFEKLEKLSAAEEIQGDGPKKERTKLITPQVAKLEHAYQPVQFEGSLGKLTVSSVNNPRKMIDAVVTSRSEDDETKEKQVRDKRRKTLVIIEKTYSLLLDVEDYERRYLLSLEEERPALMDERKHKICSMYDNLRGKLPGQERPSDDHFVQIMCIRKGKRMVARILPFLSTEQAADILMATARNLPFLIKKDAQDEVLPCLLSPFSLLLYHLPSVTVTSLLQQLMNLPQSASAPAPSNSHLTAVLQNKFGLSLLLILLSRGEDLQSSDPAIESTQNNQWTEVMFMATRELLRIPQAALAKPISIPTNLVSLFSRYVDRQKLNLLETKLQLVQGIR.

Residues 1 to 42 (MFRYESLEDCPLDEDEDAFQGLGEEDEEIDQFNDDTFGSGAV) are disordered. A region A; interaction with DDX6/RCK region spans residues 1-84 (MFRYESLEDC…EMDLLGDHEE (84 aa)). The interval 1–397 (MFRYESLEDC…HQSSHQDHLR (397 aa)) is involved in nuclear foci localization. Over residues 7-33 (LEDCPLDEDEDAFQGLGEEDEEIDQFN) the composition is skewed to acidic residues. The segment at 85–388 (NLAERLSKMV…LNGTGDRGGH (304 aa)) is region N; interaction with decapping machinery. The Nuclear export signal motif lies at 86–95 (LAERLSKMVI). A disordered region spans residues 155 to 195 (PQRPLQGPEDDRDLSERALPRRSTSPIIGSPPVRAVPIGTP). Ser-177 is modified (phosphoserine). The residue at position 178 (Thr-178) is a Phosphothreonine. Ser-179 and Ser-184 each carry phosphoserine. Phosphothreonine is present on Thr-194. An asymmetric dimethylarginine mark is found at Arg-217, Arg-223, and Arg-263. Residues 223–397 (RYPAPYGERI…HQSSHQDHLR (175 aa)) form an involved in RNA-binding region. Phosphoserine is present on Ser-278. Arg-284 carries the post-translational modification Asymmetric dimethylarginine. Disordered stretches follow at residues 319–340 (FSAP…GPHL) and 376–396 (HRNL…QDHL). Residues 321–337 (APPPATPPPQQHPPGPG) show a composition bias toward pro residues. Arg-385 carries the post-translational modification Omega-N-methylarginine. Positions 385 to 396 (RGGHQSSHQDHL) are enriched in basic and acidic residues. The segment at 389–448 (QSSHQDHLRKDPYANLMLQREKDWVSKIQMMQLQSTDPYLDDFYYQNYFEKLEKLSAAEE) is region H. Positions 398–770 (KDPYANLMLQ…TKLQLVQGIR (373 aa)) are involved in nuclear speckle localization. Positions 449-770 (IQGDGPKKER…TKLQLVQGIR (322 aa)) are region C.

The protein belongs to the PAT1 family. In terms of assembly, interacts (via region A) with DDX6/RCK. Interacts (via region H and region C) with LSM1 and LSM4. Interacts (via region N) with DCP1A, DCP2, EDC3, EDC4 and XRN1. Interacts with the CCR4-NOT complex. Interacts with the Lsm-containing SMN-Sm protein complex. Interacts with EIF4ENIF1/4E-T.

The protein localises to the cytoplasm. The protein resides in the P-body. It is found in the nucleus. It localises to the PML body. Its subcellular location is the nucleus speckle. In terms of biological role, RNA-binding protein involved in deadenylation-dependent decapping of mRNAs, leading to the degradation of mRNAs. Acts as a scaffold protein that connects deadenylation and decapping machinery. Required for cytoplasmic mRNA processing body (P-body) assembly. The sequence is that of Protein PAT1 homolog 1 (Patl1) from Mus musculus (Mouse).